A 129-amino-acid chain; its full sequence is Small ribosomal subunit protein uS12 (129 aa).

3-methylthioaspartic acid is present on aspartate 89. The interval 101 to 129 (TLDTSGVSDRKQSRSKYGAKQPKAVAAKK) is disordered.

This sequence belongs to the universal ribosomal protein uS12 family. Part of the 30S ribosomal subunit. Contacts proteins S8 and S17. May interact with IF1 in the 30S initiation complex.

Its function is as follows. With S4 and S5 plays an important role in translational accuracy. Functionally, interacts with and stabilizes bases of the 16S rRNA that are involved in tRNA selection in the A site and with the mRNA backbone. Located at the interface of the 30S and 50S subunits, it traverses the body of the 30S subunit contacting proteins on the other side and probably holding the rRNA structure together. The combined cluster of proteins S8, S12 and S17 appears to hold together the shoulder and platform of the 30S subunit. The polypeptide is Small ribosomal subunit protein uS12 (Chlorobium luteolum (strain DSM 273 / BCRC 81028 / 2530) (Pelodictyon luteolum)).